The following is a 28-amino-acid chain: FDDLMLLLCCRQGPVCFIPLNEWPCSRM.

Contains 2 disulfide bonds. Expressed by the venom duct.

The protein localises to the secreted. This is Conotoxin Cl1.2 from Californiconus californicus (California cone).